The primary structure comprises 254 residues: Type III pantothenate kinase (254 aa).

7-14 is an ATP binding site; that stretch reads DIGNTRLK. Substrate-binding positions include Y97 and 104–107; that span reads GSDR. The active-site Proton acceptor is the D106. Position 134 (T134) interacts with ATP. T184 lines the substrate pocket.

This sequence belongs to the type III pantothenate kinase family. Homodimer. NH4(+) is required as a cofactor. K(+) serves as cofactor.

The protein localises to the cytoplasm. It carries out the reaction (R)-pantothenate + ATP = (R)-4'-phosphopantothenate + ADP + H(+). Its pathway is cofactor biosynthesis; coenzyme A biosynthesis; CoA from (R)-pantothenate: step 1/5. Its function is as follows. Catalyzes the phosphorylation of pantothenate (Pan), the first step in CoA biosynthesis. This chain is Type III pantothenate kinase, found in Methylibium petroleiphilum (strain ATCC BAA-1232 / LMG 22953 / PM1).